A 429-amino-acid chain; its full sequence is Glutamyl-tRNA reductase (429 aa).

Substrate contacts are provided by residues 49 to 52 (TCNR), S108, 113 to 115 (EAQ), and Q119. The active-site Nucleophile is the C50. 188 to 193 (GAGEMS) is a binding site for NADP(+).

Belongs to the glutamyl-tRNA reductase family. Homodimer.

It catalyses the reaction (S)-4-amino-5-oxopentanoate + tRNA(Glu) + NADP(+) = L-glutamyl-tRNA(Glu) + NADPH + H(+). Its pathway is porphyrin-containing compound metabolism; protoporphyrin-IX biosynthesis; 5-aminolevulinate from L-glutamyl-tRNA(Glu): step 1/2. In terms of biological role, catalyzes the NADPH-dependent reduction of glutamyl-tRNA(Glu) to glutamate 1-semialdehyde (GSA). In Rubrobacter xylanophilus (strain DSM 9941 / JCM 11954 / NBRC 16129 / PRD-1), this protein is Glutamyl-tRNA reductase.